A 210-amino-acid chain; its full sequence is Somatotropin (210 aa).

A signal peptide spans 1–22 (MGQVFLLMPVLLVSCFLSHGAA). Zn(2+) is bound at residue H38. C71 and C183 are oxidised to a cystine. E192 lines the Zn(2+) pocket. Cysteines 200 and 208 form a disulfide.

The protein belongs to the somatotropin/prolactin family.

It localises to the secreted. Functionally, growth hormone plays an important role in growth control and is involved in the regulation of several anabolic processes. Implicated as an osmoregulatory substance important for seawater adaptation. The polypeptide is Somatotropin (gh) (Oncorhynchus masou (Cherry salmon)).